A 180-amino-acid chain; its full sequence is Adenine phosphoribosyltransferase (180 aa).

It belongs to the purine/pyrimidine phosphoribosyltransferase family. In terms of assembly, homodimer.

The protein localises to the cytoplasm. The enzyme catalyses AMP + diphosphate = 5-phospho-alpha-D-ribose 1-diphosphate + adenine. It functions in the pathway purine metabolism; AMP biosynthesis via salvage pathway; AMP from adenine: step 1/1. Functionally, catalyzes a salvage reaction resulting in the formation of AMP, that is energically less costly than de novo synthesis. This chain is Adenine phosphoribosyltransferase, found in Haemophilus influenzae (strain PittEE).